A 183-amino-acid chain; its full sequence is TATA-box-binding protein 2 (183 aa).

Tandem repeats lie at residues 8 to 84 (IENV…AKKL) and 99 to 177 (VQNI…RQQL).

This sequence belongs to the TBP family.

Its function is as follows. General factor that plays a role in the activation of archaeal genes transcribed by RNA polymerase. Binds specifically to the TATA box promoter element which lies close to the position of transcription initiation. The chain is TATA-box-binding protein 2 from Methanosarcina mazei (strain ATCC BAA-159 / DSM 3647 / Goe1 / Go1 / JCM 11833 / OCM 88) (Methanosarcina frisia).